A 279-amino-acid polypeptide reads, in one-letter code: Pantothenate synthetase (279 aa).

Residue 26–33 (MGNLHEGH) coordinates ATP. Catalysis depends on H33, which acts as the Proton donor. Q57 serves as a coordination point for (R)-pantoate. A beta-alanine-binding site is contributed by Q57. 144–147 (GKKD) lines the ATP pocket. Residue Q150 participates in (R)-pantoate binding. Residues V173 and 181-184 (LSSR) each bind ATP.

This sequence belongs to the pantothenate synthetase family. In terms of assembly, homodimer.

It is found in the cytoplasm. It carries out the reaction (R)-pantoate + beta-alanine + ATP = (R)-pantothenate + AMP + diphosphate + H(+). The protein operates within cofactor biosynthesis; (R)-pantothenate biosynthesis; (R)-pantothenate from (R)-pantoate and beta-alanine: step 1/1. Functionally, catalyzes the condensation of pantoate with beta-alanine in an ATP-dependent reaction via a pantoyl-adenylate intermediate. The polypeptide is Pantothenate synthetase (Burkholderia ambifaria (strain MC40-6)).